The chain runs to 519 residues: Ribonuclease Y (519 aa).

The chain crosses the membrane as a helical span at residues 3 to 23 (LIEIVLLLVGMAVGAATGFIL). The 64-residue stretch at 209–272 (TVTAVSLPSE…QIAKMALERL (64 aa)) folds into the KH domain. The 94-residue stretch at 335–428 (VLQHSMEVAS…VQAADSLSGA (94 aa)) folds into the HD domain.

The protein belongs to the RNase Y family.

Its subcellular location is the cell membrane. Endoribonuclease that initiates mRNA decay. This chain is Ribonuclease Y, found in Oleidesulfovibrio alaskensis (strain ATCC BAA-1058 / DSM 17464 / G20) (Desulfovibrio alaskensis).